The chain runs to 212 residues: Ribosome maturation factor RimP (212 aa).

This sequence belongs to the RimP family.

It localises to the cytoplasm. Functionally, required for maturation of 30S ribosomal subunits. The sequence is that of Ribosome maturation factor RimP from Variovorax paradoxus (strain S110).